The sequence spans 535 residues: Probable C4-dicarboxylate sensor kinase (535 aa).

The Cytoplasmic segment spans residues 1–11 (MNKKKLSIRWK). The helical transmembrane segment at 12–32 (ITILSYILVIFSFLIGGIVLI) threads the bilayer. Residues 33–172 (GNIQHTEERE…IADILLHLKR (140 aa)) are Extracellular-facing. The helical transmembrane segment at 173-193 (DIAFIVVLTLGFGLAGSFLLA) threads the bilayer. The Cytoplasmic portion of the chain corresponds to 194–535 (RHIKKQMFQL…MKGEEAQHGS (342 aa)). One can recognise a PAS domain in the interval 213-276 (EERTATFHSM…PEIVERNKAV (64 aa)). The region spanning 333 to 528 (VQNHEHMNKL…SFSIVFPMKG (196 aa)) is the Histidine kinase domain. A Phosphohistidine; by autocatalysis modification is found at H336.

It localises to the cell membrane. The catalysed reaction is ATP + protein L-histidine = ADP + protein N-phospho-L-histidine.. Functionally, member of the two-component regulatory system DctS/DctR. Probably activates DctR by phosphorylation. Essential for expression of dctP. This Bacillus subtilis (strain 168) protein is Probable C4-dicarboxylate sensor kinase (dctS).